The following is a 251-amino-acid chain: uncharacterized protein (251 aa).

N-linked (GlcNAc...) asparagine; by host glycosylation is found at Asn-149, Asn-152, and Asn-207. The chain crosses the membrane as a helical span at residues 226 to 246 (YLIFIIIIIIFIILILLWIKY).

Belongs to the glycosyltransferase 32 family.

Its subcellular location is the membrane. This is an uncharacterized protein from Acanthamoeba polyphaga (Amoeba).